The following is a 38-amino-acid chain: Large ribosomal subunit protein bL36A (38 aa).

Belongs to the bacterial ribosomal protein bL36 family.

This chain is Large ribosomal subunit protein bL36A, found in Prochlorococcus marinus (strain MIT 9515).